The following is a 64-amino-acid chain: Large ribosomal subunit protein bL33 (64 aa).

This sequence belongs to the bacterial ribosomal protein bL33 family.

The sequence is that of Large ribosomal subunit protein bL33 from Parasynechococcus marenigrum (strain WH8102).